A 132-amino-acid chain; its full sequence is Small ribosomal subunit protein uS8 (132 aa).

Belongs to the universal ribosomal protein uS8 family. As to quaternary structure, part of the 30S ribosomal subunit. Contacts proteins S5 and S12.

Its function is as follows. One of the primary rRNA binding proteins, it binds directly to 16S rRNA central domain where it helps coordinate assembly of the platform of the 30S subunit. In Geobacillus sp. (strain WCH70), this protein is Small ribosomal subunit protein uS8.